A 404-amino-acid chain; its full sequence is Lipase lipl-3 (404 aa).

The signal sequence occupies residues 1-20; sequence MCSSLCALLLVILAVHNVHA. N-linked (GlcNAc...) asparagine glycosylation is present at N65. The Nucleophile role is filled by S168. N-linked (GlcNAc...) asparagine glycosylation is present at N272. Catalysis depends on charge relay system residues D344 and H376.

This sequence belongs to the AB hydrolase superfamily. Lipase family.

It localises to the secreted. It is found in the lysosome lumen. In terms of biological role, lipase that, together with lipl-1, plays a role in the response to nutrient deprivation by controlling lipid metabolism. Specifically, involved in the breakdown of lipids during lipophagy, a process during which lipids contained in lipid droplets that have been delivered to lysosomes by autophagy are degraded. The chain is Lipase lipl-3 from Caenorhabditis elegans.